Reading from the N-terminus, the 296-residue chain is Putative F-box protein At1g67623 (296 aa).

Residues 21–70 form the F-box domain; the sequence is SLCLDSLPEDLLVEISSCTGASSLSAVRNLRLVSKSFRRICDEKYVFYRL.

In Arabidopsis thaliana (Mouse-ear cress), this protein is Putative F-box protein At1g67623.